The chain runs to 166 residues: Co-chaperone protein HscB homolog (166 aa).

The J domain maps to 3–75 (QYFTLFRIEP…IDRAAYLLKT (73 aa)).

The protein belongs to the HscB family. In terms of assembly, interacts with HscA and stimulates its ATPase activity.

Co-chaperone involved in the maturation of iron-sulfur cluster-containing proteins. Seems to help targeting proteins to be folded toward HscA. In Neisseria meningitidis serogroup C (strain 053442), this protein is Co-chaperone protein HscB homolog.